Consider the following 227-residue polypeptide: Thymidine kinase (227 aa).

ATP is bound by residues glycine 15 to threonine 22 and aspartate 87 to glutamine 90. Residue glutamate 88 is the Proton acceptor of the active site. Positions 144, 147, 176, and 179 each coordinate Zn(2+). Positions arginine 198–alanine 227 are disordered. Residues alanine 217 to alanine 227 are compositionally biased toward low complexity.

This sequence belongs to the thymidine kinase family. In terms of assembly, homotetramer.

Its subcellular location is the cytoplasm. The enzyme catalyses thymidine + ATP = dTMP + ADP + H(+). The sequence is that of Thymidine kinase from Salinibacter ruber (strain DSM 13855 / M31).